The primary structure comprises 1098 residues: Mediator of RNA polymerase II transcription subunit 5 (1098 aa).

A disordered region spans residues 1019–1041 (PDDVQKSADMKPDTGIKEDDSEK). Over residues 1021-1041 (DVQKSADMKPDTGIKEDDSEK) the composition is skewed to basic and acidic residues.

The protein belongs to the Mediator complex subunit 5 family. As to quaternary structure, component of the Mediator complex.

Its subcellular location is the nucleus. Its function is as follows. Component of the Mediator complex, a coactivator involved in the regulated transcription of nearly all RNA polymerase II-dependent genes. Mediator functions as a bridge to convey information from gene-specific regulatory proteins to the basal RNA polymerase II transcription machinery. Mediator is recruited to promoters by direct interactions with regulatory proteins and serves as a scaffold for the assembly of a functional preinitiation complex with RNA polymerase II and the general transcription factors. This chain is Mediator of RNA polymerase II transcription subunit 5 (NUT1), found in Eremothecium gossypii (strain ATCC 10895 / CBS 109.51 / FGSC 9923 / NRRL Y-1056) (Yeast).